We begin with the raw amino-acid sequence, 243 residues long: 1-(5-phosphoribosyl)-5-[(5-phosphoribosylamino)methylideneamino] imidazole-4-carboxamide isomerase (243 aa).

D8 (proton acceptor) is an active-site residue. The Proton donor role is filled by D129.

Belongs to the HisA/HisF family.

The protein resides in the cytoplasm. It carries out the reaction 1-(5-phospho-beta-D-ribosyl)-5-[(5-phospho-beta-D-ribosylamino)methylideneamino]imidazole-4-carboxamide = 5-[(5-phospho-1-deoxy-D-ribulos-1-ylimino)methylamino]-1-(5-phospho-beta-D-ribosyl)imidazole-4-carboxamide. The protein operates within amino-acid biosynthesis; L-histidine biosynthesis; L-histidine from 5-phospho-alpha-D-ribose 1-diphosphate: step 4/9. The sequence is that of 1-(5-phosphoribosyl)-5-[(5-phosphoribosylamino)methylideneamino] imidazole-4-carboxamide isomerase from Syntrophotalea carbinolica (strain DSM 2380 / NBRC 103641 / GraBd1) (Pelobacter carbinolicus).